Here is a 150-residue protein sequence, read N- to C-terminus: Ribosome maturation factor RimP (150 aa).

It belongs to the RimP family.

The protein resides in the cytoplasm. Required for maturation of 30S ribosomal subunits. This Acidithiobacillus ferrooxidans (strain ATCC 23270 / DSM 14882 / CIP 104768 / NCIMB 8455) (Ferrobacillus ferrooxidans (strain ATCC 23270)) protein is Ribosome maturation factor RimP.